A 77-amino-acid chain; its full sequence is Acyl carrier protein (77 aa).

The 76-residue stretch at 1–76 (MAVFDEVKDV…DVVNYIDGLK (76 aa)) folds into the Carrier domain. S36 is subject to O-(pantetheine 4'-phosphoryl)serine.

The protein belongs to the acyl carrier protein (ACP) family. 4'-phosphopantetheine is transferred from CoA to a specific serine of apo-ACP by AcpS. This modification is essential for activity because fatty acids are bound in thioester linkage to the sulfhydryl of the prosthetic group.

The protein localises to the cytoplasm. It participates in lipid metabolism; fatty acid biosynthesis. Carrier of the growing fatty acid chain in fatty acid biosynthesis. This chain is Acyl carrier protein, found in Campylobacter fetus subsp. fetus (strain 82-40).